A 262-amino-acid polypeptide reads, in one-letter code: Ribosomal RNA small subunit methyltransferase A (262 aa).

S-adenosyl-L-methionine contacts are provided by isoleucine 18, glycine 43, glutamate 65, aspartate 91, and asparagine 110.

It belongs to the class I-like SAM-binding methyltransferase superfamily. rRNA adenine N(6)-methyltransferase family. RsmA subfamily.

The protein resides in the cytoplasm. The catalysed reaction is adenosine(1518)/adenosine(1519) in 16S rRNA + 4 S-adenosyl-L-methionine = N(6)-dimethyladenosine(1518)/N(6)-dimethyladenosine(1519) in 16S rRNA + 4 S-adenosyl-L-homocysteine + 4 H(+). Functionally, specifically dimethylates two adjacent adenosines (A1518 and A1519) in the loop of a conserved hairpin near the 3'-end of 16S rRNA in the 30S particle. May play a critical role in biogenesis of 30S subunits. The chain is Ribosomal RNA small subunit methyltransferase A from Ehrlichia ruminantium (strain Gardel).